A 331-amino-acid chain; its full sequence is Ribosomal RNA small subunit methyltransferase H (331 aa).

Residues Gly-56–His-58, Asp-76, Phe-100, Asp-122, and Gln-129 contribute to the S-adenosyl-L-methionine site.

Belongs to the methyltransferase superfamily. RsmH family.

The protein resides in the cytoplasm. The catalysed reaction is cytidine(1402) in 16S rRNA + S-adenosyl-L-methionine = N(4)-methylcytidine(1402) in 16S rRNA + S-adenosyl-L-homocysteine + H(+). In terms of biological role, specifically methylates the N4 position of cytidine in position 1402 (C1402) of 16S rRNA. In Chromohalobacter salexigens (strain ATCC BAA-138 / DSM 3043 / CIP 106854 / NCIMB 13768 / 1H11), this protein is Ribosomal RNA small subunit methyltransferase H.